The chain runs to 488 residues: MKGVLLDESVLFSPESEDSSPSLRESVPSLLRLLRYSMIRTGISYGLDLPENKVDLLRKTAAEYSINCLPLETSLTSVTFGDTLKAWYSDGSILYVASSRKEEILRELSPSQLVVLLDVEGDSLEDPNIIHIHSLEELPMTICCINKKAMGDGAAIVAYIMKPSRVEDFAKRGALPMYPTSCGLIFLPLMFEFPLASQLKHADIIFHKATDEILSIELNCSDSKSSVAVTFSTGMEKLKKYMEDQNACAIVDPIRNIYPVVDRLKMQHILLGLEGLGAAGRKIRGACFLKIDSYDEPDLAQNLSRAGLSLPCIVKPQVACGVADAHSMAIVFRVEDFKNLNTPVPAIIQEYVDHSSRIFKFYVLGETIFHAVKKSIPSSSSLRKSAEENGLKPILFDSLKSLPVDSANQNPVSEIDLELVTEAATWLRKKLDLTIFGFDVVIQEGTGDHVIVDLNYLPSFKEVPDNIAVPAFWEAIRNRFDQHVQEKH.

1D-myo-inositol 1,3,4-trisphosphate is bound by residues Lys-208 and Lys-224. An ATP-grasp domain is found at 246 to 488; sequence NACAIVDPIR…RFDQHVQEKH (243 aa). The ATP site is built by Arg-263 and Lys-315. 1D-myo-inositol 1,3,4-trisphosphate contacts are provided by His-326 and Lys-360. Residues 349 to 360, Ser-375, and Ser-398 contribute to the ATP site; that span reads QEYVDHSSRIFK. Positions 439, 453, and 455 each coordinate Mg(2+). 2 residues coordinate 1D-myo-inositol 1,3,4-trisphosphate: Asn-455 and Ser-459.

Belongs to the ITPK1 family. Monomer. It depends on Mg(2+) as a cofactor. As to expression, expressed in roots, leaf vasculature, cauline leaves, flower buds and siliques.

The catalysed reaction is 1D-myo-inositol 1,3,4-trisphosphate + ATP = 1D-myo-inositol 1,3,4,5-tetrakisphosphate + ADP + H(+). The enzyme catalyses 1D-myo-inositol 1,3,4-trisphosphate + ATP = 1D-myo-inositol 1,3,4,6-tetrakisphosphate + ADP + H(+). In terms of biological role, kinase that can phosphorylate the inositol polyphosphate Ins(1,3,4)P3 to form InsP4. Also phosphorylates a racemic mixture of Ins(1,4,6)P3 and Ins(3,4,6)P3 to form InsP4. Does not display inositol 3,4,5,6-tetrakisphosphate 1-kinase activity, but possesses inositol 1,4,5,6-tetrakisphosphate and inositol 1,3,4,5-tetrakisphosphate isomerase activity. Ins(1,3,4,6)P4 is an essential molecule in the hexakisphosphate (InsP6) pathway. The sequence is that of Inositol 1,3,4-trisphosphate 5/6-kinase 4 (ITPK4) from Arabidopsis thaliana (Mouse-ear cress).